The sequence spans 49 residues: Large ribosomal subunit protein bL33B (49 aa).

The protein belongs to the bacterial ribosomal protein bL33 family.

The polypeptide is Large ribosomal subunit protein bL33B (Acholeplasma laidlawii (strain PG-8A)).